The sequence spans 652 residues: Large subunit GTPase 1 homolog (652 aa).

Serine 93 bears the Phosphoserine mark. Positions 164–438 (WRQLWRVIER…LCDCPGLVMP (275 aa)) constitute a CP-type G domain. 212–215 (NKAD) is a GTP binding site. Position 252 is a phosphoserine (serine 252). Residues 288-347 (LGEAASSEEDESEYEDCQEEEEDWQTCLEDSSSSDEEACGQDCKEGHTVDSEAQGRNTPQ) are disordered. The span at 293–311 (SSEEDESEYEDCQEEEEDW) shows a compositional bias: acidic residues. Residues 387 to 394 (GYPNVGKS) and 431 to 434 (DCPG) contribute to the GTP site. Residues 625–652 (RGAGKPWKKHGNRNKKEKSRRLYKHLDM) are disordered. The span at 630–652 (PWKKHGNRNKKEKSRRLYKHLDM) shows a compositional bias: basic residues.

This sequence belongs to the TRAFAC class YlqF/YawG GTPase family. LSG1 subfamily.

It localises to the cytoplasm. The protein localises to the endoplasmic reticulum. The protein resides in the nucleus. Its subcellular location is the cajal body. The enzyme catalyses GTP + H2O = GDP + phosphate + H(+). Functions as a GTPase. May act by mediating the release of NMD3 from the 60S ribosomal subunit after export into the cytoplasm during the 60S ribosomal subunit maturation. The chain is Large subunit GTPase 1 homolog from Bos taurus (Bovine).